Here is an 839-residue protein sequence, read N- to C-terminus: Homeobox-leucine zipper protein HOX10 (839 aa).

Disordered stretches follow at residues 1–24 and 132–157; these read MAAAVAMRGSSSDGGGYDKVSGMD and QNTPLANDTSCESNVTTPQNPLRDAS. Residues 24–87 constitute a DNA-binding region (homeobox); the sequence is DSGKYVRYTP…NRRCRDKQRK (64 aa). Residues 91 to 134 adopt a coiled-coil conformation; that stretch reads RLQAVNRKLTAMNKLLMEENERLQKQVSQLVHENAHMRQQLQNT. The START domain maps to 155–383; it reads DASNPSGLLS…IAQETSGEVV (229 aa).

The protein belongs to the HD-ZIP homeobox family. Class III subfamily. Expressed in stems, leaf sheaths and blades and panicles.

The protein resides in the nucleus. Its function is as follows. Probable transcription factor. This chain is Homeobox-leucine zipper protein HOX10 (HOX10), found in Oryza sativa subsp. japonica (Rice).